The sequence spans 121 residues: Large ribosomal subunit protein uL24 (121 aa).

It belongs to the universal ribosomal protein uL24 family. In terms of assembly, part of the 50S ribosomal subunit.

One of two assembly initiator proteins, it binds directly to the 5'-end of the 23S rRNA, where it nucleates assembly of the 50S subunit. Functionally, located at the polypeptide exit tunnel on the outside of the subunit. In Thermococcus kodakarensis (strain ATCC BAA-918 / JCM 12380 / KOD1) (Pyrococcus kodakaraensis (strain KOD1)), this protein is Large ribosomal subunit protein uL24.